We begin with the raw amino-acid sequence, 376 residues long: Queuine tRNA-ribosyltransferase (376 aa).

D90 (proton acceptor) is an active-site residue. Substrate contacts are provided by residues 90 to 94 (DSGGF), D144, Q193, and G220. The interval 251–257 (GVGTPED) is RNA binding. D270 (nucleophile) is an active-site residue. The tract at residues 275–279 (TRNAR) is RNA binding; important for wobble base 34 recognition. 4 residues coordinate Zn(2+): C308, C310, C313, and H339.

It belongs to the queuine tRNA-ribosyltransferase family. As to quaternary structure, homodimer. Within each dimer, one monomer is responsible for RNA recognition and catalysis, while the other monomer binds to the replacement base PreQ1. Requires Zn(2+) as cofactor.

It catalyses the reaction 7-aminomethyl-7-carbaguanine + guanosine(34) in tRNA = 7-aminomethyl-7-carbaguanosine(34) in tRNA + guanine. The protein operates within tRNA modification; tRNA-queuosine biosynthesis. In terms of biological role, catalyzes the base-exchange of a guanine (G) residue with the queuine precursor 7-aminomethyl-7-deazaguanine (PreQ1) at position 34 (anticodon wobble position) in tRNAs with GU(N) anticodons (tRNA-Asp, -Asn, -His and -Tyr). Catalysis occurs through a double-displacement mechanism. The nucleophile active site attacks the C1' of nucleotide 34 to detach the guanine base from the RNA, forming a covalent enzyme-RNA intermediate. The proton acceptor active site deprotonates the incoming PreQ1, allowing a nucleophilic attack on the C1' of the ribose to form the product. After dissociation, two additional enzymatic reactions on the tRNA convert PreQ1 to queuine (Q), resulting in the hypermodified nucleoside queuosine (7-(((4,5-cis-dihydroxy-2-cyclopenten-1-yl)amino)methyl)-7-deazaguanosine). The protein is Queuine tRNA-ribosyltransferase of Cupriavidus necator (strain ATCC 17699 / DSM 428 / KCTC 22496 / NCIMB 10442 / H16 / Stanier 337) (Ralstonia eutropha).